A 280-amino-acid chain; its full sequence is Phosphatidylserine decarboxylase proenzyme (280 aa).

Active-site charge relay system; for autoendoproteolytic cleavage activity residues include Asp-90, His-146, and Ser-247. The Schiff-base intermediate with substrate; via pyruvic acid; for decarboxylase activity role is filled by Ser-247. Residue Ser-247 is modified to Pyruvic acid (Ser); by autocatalysis.

The protein belongs to the phosphatidylserine decarboxylase family. PSD-B subfamily. Prokaryotic type I sub-subfamily. In terms of assembly, heterodimer of a large membrane-associated beta subunit and a small pyruvoyl-containing alpha subunit. The cofactor is pyruvate. Post-translationally, is synthesized initially as an inactive proenzyme. Formation of the active enzyme involves a self-maturation process in which the active site pyruvoyl group is generated from an internal serine residue via an autocatalytic post-translational modification. Two non-identical subunits are generated from the proenzyme in this reaction, and the pyruvate is formed at the N-terminus of the alpha chain, which is derived from the carboxyl end of the proenzyme. The autoendoproteolytic cleavage occurs by a canonical serine protease mechanism, in which the side chain hydroxyl group of the serine supplies its oxygen atom to form the C-terminus of the beta chain, while the remainder of the serine residue undergoes an oxidative deamination to produce ammonia and the pyruvoyl prosthetic group on the alpha chain. During this reaction, the Ser that is part of the protease active site of the proenzyme becomes the pyruvoyl prosthetic group, which constitutes an essential element of the active site of the mature decarboxylase.

The protein localises to the cell membrane. It catalyses the reaction a 1,2-diacyl-sn-glycero-3-phospho-L-serine + H(+) = a 1,2-diacyl-sn-glycero-3-phosphoethanolamine + CO2. Its pathway is phospholipid metabolism; phosphatidylethanolamine biosynthesis; phosphatidylethanolamine from CDP-diacylglycerol: step 2/2. Its function is as follows. Catalyzes the formation of phosphatidylethanolamine (PtdEtn) from phosphatidylserine (PtdSer). This chain is Phosphatidylserine decarboxylase proenzyme, found in Myxococcus xanthus (strain DK1622).